Consider the following 246-residue polypeptide: Ribonuclease 3 (246 aa).

One can recognise an RNase III domain in the interval 18 to 147 (FQELQNKIGI…FIGALYLDQG (130 aa)). Glutamate 60 contributes to the Mg(2+) binding site. Residue aspartate 64 is part of the active site. Residues aspartate 133 and glutamate 136 each contribute to the Mg(2+) site. Glutamate 136 is a catalytic residue. The DRBM domain maps to 173-242 (DFKSQLQELV…AQMALETLRA (70 aa)).

The protein belongs to the ribonuclease III family. Homodimer. Mg(2+) is required as a cofactor.

The protein resides in the cytoplasm. It catalyses the reaction Endonucleolytic cleavage to 5'-phosphomonoester.. Functionally, digests double-stranded RNA. Involved in the processing of primary rRNA transcript to yield the immediate precursors to the large and small rRNAs (23S and 16S). Processes some mRNAs, and tRNAs when they are encoded in the rRNA operon. Processes pre-crRNA and tracrRNA of type II CRISPR loci if present in the organism. In Geobacillus kaustophilus (strain HTA426), this protein is Ribonuclease 3.